Reading from the N-terminus, the 111-residue chain is Large ribosomal subunit protein eL31 (111 aa).

It belongs to the eukaryotic ribosomal protein eL31 family.

This Dictyostelium discoideum (Social amoeba) protein is Large ribosomal subunit protein eL31 (rpl31).